Here is a 213-residue protein sequence, read N- to C-terminus: MIITIFGPPGSGKGTQSSLLIAKYNLKLISVGDLLRNIISSSSELGKKIKGTVESGNLIQDEIICGLLRDQLALVDDNCLLDGFPRNLNQAHFLTQVLQEKYNRDVDIVVELQLDDNIAIDRLKNRLACLDCKSIYSVSSFKSTTCAKCKSTRLEKRIDDADMSAINKRISEYHLQMKGLREYYKGKLLTIDANLSVDEVTQEIESKISCNLV.

10-15 (GSGKGT) is a binding site for ATP. The NMP stretch occupies residues 30-59 (SVGDLLRNIISSSSELGKKIKGTVESGNLI). Residues Arg36, 57-59 (NLI), 83-86 (GFPR), and Gln90 each bind AMP. The tract at residues 125-160 (NRLACLDCKSIYSVSSFKSTTCAKCKSTRLEKRIDD) is LID. Arg126 lines the ATP pocket. 2 residues coordinate Zn(2+): Cys129 and Cys132. 135–136 (IY) is a binding site for ATP. Zn(2+) contacts are provided by Cys146 and Cys149. Residues Arg157 and Arg169 each coordinate AMP. Residue Leu195 coordinates ATP.

Belongs to the adenylate kinase family. Monomer.

Its subcellular location is the cytoplasm. The catalysed reaction is AMP + ATP = 2 ADP. Its pathway is purine metabolism; AMP biosynthesis via salvage pathway; AMP from ADP: step 1/1. Functionally, catalyzes the reversible transfer of the terminal phosphate group between ATP and AMP. Plays an important role in cellular energy homeostasis and in adenine nucleotide metabolism. The protein is Adenylate kinase of Wolbachia sp. subsp. Drosophila simulans (strain wRi).